We begin with the raw amino-acid sequence, 343 residues long: Ribosomal RNA small subunit methyltransferase H (343 aa).

Residues 39-41 (AGH), D58, F87, D108, and Q115 each bind S-adenosyl-L-methionine.

The protein belongs to the methyltransferase superfamily. RsmH family.

The protein resides in the cytoplasm. It carries out the reaction cytidine(1402) in 16S rRNA + S-adenosyl-L-methionine = N(4)-methylcytidine(1402) in 16S rRNA + S-adenosyl-L-homocysteine + H(+). Specifically methylates the N4 position of cytidine in position 1402 (C1402) of 16S rRNA. In Bifidobacterium adolescentis (strain ATCC 15703 / DSM 20083 / NCTC 11814 / E194a), this protein is Ribosomal RNA small subunit methyltransferase H.